A 317-amino-acid chain; its full sequence is L-lactate dehydrogenase (317 aa).

NAD(+) is bound by residues Val-16, Asp-37, Arg-42, Tyr-67, and 81 to 82; that span reads GA. Gln-84 and Arg-90 together coordinate substrate. NAD(+) is bound by residues Ser-103, 120–122, and Ser-145; that span reads AAN. Position 122–125 (122–125) interacts with substrate; it reads NPVD. 150–153 provides a ligand contact to substrate; that stretch reads DSAR. His-177 functions as the Proton acceptor in the catalytic mechanism. Tyr-221 carries the phosphotyrosine modification. Position 230 (Thr-230) interacts with substrate.

It belongs to the LDH/MDH superfamily. LDH family. In terms of assembly, homotetramer.

The protein localises to the cytoplasm. The enzyme catalyses (S)-lactate + NAD(+) = pyruvate + NADH + H(+). It functions in the pathway fermentation; pyruvate fermentation to lactate; (S)-lactate from pyruvate: step 1/1. Functionally, catalyzes the conversion of lactate to pyruvate. This Limosilactobacillus fermentum (strain NBRC 3956 / LMG 18251) (Lactobacillus fermentum) protein is L-lactate dehydrogenase.